Consider the following 245-residue polypeptide: tRNA (guanine-N(1)-)-methyltransferase (245 aa).

Residues Gly-111 and 131 to 136 each bind S-adenosyl-L-methionine; that span reads MGDYVL.

The protein belongs to the RNA methyltransferase TrmD family. Homodimer.

Its subcellular location is the cytoplasm. The enzyme catalyses guanosine(37) in tRNA + S-adenosyl-L-methionine = N(1)-methylguanosine(37) in tRNA + S-adenosyl-L-homocysteine + H(+). Functionally, specifically methylates guanosine-37 in various tRNAs. The polypeptide is tRNA (guanine-N(1)-)-methyltransferase (Staphylococcus aureus (strain USA300)).